The primary structure comprises 113 residues: MEDFQASEETAFVVDEVSSIVKEAIESAIGGNAYQHSKVNQWTTNVLEQTLSQLTKLGRPFKYIVTCVIMQKNGAGLHSASSCFWDSSTDGSCTVRWENKTMYCIVSTFGLSI.

Met-1 bears the N-acetylmethionine mark. Residues 41 to 113 form an interaction with GNB1 region; that stretch reads QWTTNVLEQT…CIVSTFGLSI (73 aa).

Belongs to the dynein light chain Tctex-type family. In terms of assembly, homodimer. The cytoplasmic dynein 1 complex consists of two catalytic heavy chains (HCs) and a number of non-catalytic subunits presented by intermediate chains (ICs), light intermediate chains (LICs) and light chains (LCs); the composition seems to vary in respect to the IC, LIC and LC composition. The heavy chain homodimer serves as a scaffold for the probable homodimeric assembly of the respective non-catalytic subunits. The ICs and LICs bind directly to the HC dimer and the LCs assemble on the IC dimer. DYNLT1 and DYNLT3 compete for association with dynein IC (DYNC1I1 or DYNC1I2). Self-associates. Interacts with RHO. Interacts with DYNC1I1 and DYNC1I2. Interacts with DOC2A, DOC2B and SCN10A. Interacts with PVR. Interacts with SVIL isoform 2. Interacts with GNB1; the interaction occurs in presence of guanine nucleotide-binding protein G(T) subunit gamma; the interaction diminishes the association of DYNLT1 with dynein IC (DYNC1I1 or DYNC1I2). Interacts with GNB2, GNB3 and GNB5; the interactions occur in presence of guanine nucleotide-binding protein G(T) subunit gamma. Interacts with ACVR2B and ARHGEF2. Interacts with DNAI4. Interacts with CFAP61. Post-translationally, phosphorylated by BMPR2. The phosphorylation status is proposed to regulate the association with the cytoplasmic dynein complex and may have role in cytoplasmic dynein cargo release. As to expression, high level in testis (germ cell-specific). Expressed in sperm (at protein level). 200-fold lower in liver, brain, heart, spleen, and kidney. Levels in thymus and two embryonal carcinoma cell lines were several-fold higher than this low constitutive level.

It is found in the golgi apparatus. The protein resides in the cytoplasm. Its subcellular location is the cytoskeleton. It localises to the spindle. Its function is as follows. Acts as one of several non-catalytic accessory components of the cytoplasmic dynein 1 complex that are thought to be involved in linking dynein to cargos and to adapter proteins that regulate dynein function. Cytoplasmic dynein 1 acts as a motor for the intracellular retrograde motility of vesicles and organelles along microtubules. Binds to transport cargos and is involved in apical cargo transport such as rhodopsin-bearing vesicles in polarized epithelia. May also be a accessory component of axonemal dynein. Plays an important role in male germ cell development and function. Candidate for involvement in male sterility. Plays a role in neuronal morphogenesis; the function is independent of cytoplasmic dynein and seems to be coupled to regulation of the actin cytoskeleton by enhancing Rac1 activity. The function in neurogenesis may be regulated by association with a G-protein beta-gamma dimer. May function as a receptor-independent activator of heterotrimeric G-protein signaling; the activation appears to be independent of a nucleotide exchange. Plays a role in regulating neurogenesis; inhibits the genesis of neurons from precursor cells during cortical development presumably by antagonizing ARHGEF2. Unrelated to the role in retrograde microtubule-associated movement may play a role in the dimerization of cytoplasmic proteins/domains such as for ACVR2B. Binds to the cytoplasmic domain of ACVR2B and, in vitro, inhibits ACVR2B signaling. Involved in the regulation of mitotic spindle orientation. This chain is Dynein light chain Tctex-type 1 (Dynlt1), found in Mus musculus (Mouse).